The chain runs to 279 residues: Ribosomal RNA small subunit methyltransferase I (279 aa).

It belongs to the methyltransferase superfamily. RsmI family.

It is found in the cytoplasm. The enzyme catalyses cytidine(1402) in 16S rRNA + S-adenosyl-L-methionine = 2'-O-methylcytidine(1402) in 16S rRNA + S-adenosyl-L-homocysteine + H(+). Catalyzes the 2'-O-methylation of the ribose of cytidine 1402 (C1402) in 16S rRNA. This Synechocystis sp. (strain ATCC 27184 / PCC 6803 / Kazusa) protein is Ribosomal RNA small subunit methyltransferase I.